A 338-amino-acid chain; its full sequence is Mitoferrin-1 (338 aa).

Residues methionine 1–serine 42 form a disordered region. A compositionally biased stretch (basic and acidic residues) spans arginine 15 to glycine 26. Solcar repeat units lie at residues alanine 43–threonine 131, asparagine 141–glutamine 225, and tyrosine 232–phenylalanine 326. 6 helical membrane passes run valine 45–tyrosine 64, glycine 106–tyrosine 125, histidine 143–asparagine 162, serine 200–tyrosine 219, proline 234–threonine 253, and glycine 301–tyrosine 320.

The protein belongs to the mitochondrial carrier (TC 2.A.29) family. As to quaternary structure, interacts with ACB10; this interaction stabilizes SLC25A37 and enhances the function of SLC25A37 to import mitochondrial iron during erythroid differentiation.

It localises to the mitochondrion inner membrane. The catalysed reaction is Fe(2+)(in) = Fe(2+)(out). Functionally, mitochondrial iron transporter that specifically mediates iron uptake in developing erythroid cells, thereby playing an essential role in heme biosynthesis. The polypeptide is Mitoferrin-1 (SLC25A37) (Homo sapiens (Human)).